Reading from the N-terminus, the 325-residue chain is Probable cell division protein WhiA (325 aa).

A DNA-binding region (H-T-H motif) is located at residues 273–306; that stretch reads SLEELGALADPPLTKDAVAGRIRRLLALADKRAN.

It belongs to the WhiA family.

Functionally, involved in cell division and chromosome segregation. This is Probable cell division protein WhiA from Frankia casuarinae (strain DSM 45818 / CECT 9043 / HFP020203 / CcI3).